The sequence spans 229 residues: Phosphatidylinositol N-acetylglucosaminyltransferase subunit GPI15 (229 aa).

A run of 2 helical transmembrane segments spans residues 59–79 and 101–121; these read IQYH…VICL and ILII…GPSV.

It belongs to the PIGH family. As to quaternary structure, component of the phosphatidylinositol N-acetylglucosaminyltransferase (GPI-GlcNAc transferase) complex composed of at least GPI1, GPI2, GPI3, GPI15, GPI19 and ERI1.

Its subcellular location is the membrane. It catalyses the reaction a 1,2-diacyl-sn-glycero-3-phospho-(1D-myo-inositol) + UDP-N-acetyl-alpha-D-glucosamine = a 6-(N-acetyl-alpha-D-glucosaminyl)-1-(1,2-diacyl-sn-glycero-3-phospho)-1D-myo-inositol + UDP + H(+). It functions in the pathway glycolipid biosynthesis; glycosylphosphatidylinositol-anchor biosynthesis. Functionally, part of the complex catalyzing the transfer of N-acetylglucosamine from UDP-N-acetylglucosamine to phosphatidylinositol, the first step of GPI biosynthesis. The sequence is that of Phosphatidylinositol N-acetylglucosaminyltransferase subunit GPI15 (GPI15) from Saccharomyces cerevisiae (strain ATCC 204508 / S288c) (Baker's yeast).